A 274-amino-acid polypeptide reads, in one-letter code: 2,3,4,5-tetrahydropyridine-2,6-dicarboxylate N-succinyltransferase (274 aa).

The substrate site is built by arginine 104 and aspartate 141.

This sequence belongs to the transferase hexapeptide repeat family. Homotrimer.

The protein resides in the cytoplasm. It carries out the reaction (S)-2,3,4,5-tetrahydrodipicolinate + succinyl-CoA + H2O = (S)-2-succinylamino-6-oxoheptanedioate + CoA. Its pathway is amino-acid biosynthesis; L-lysine biosynthesis via DAP pathway; LL-2,6-diaminopimelate from (S)-tetrahydrodipicolinate (succinylase route): step 1/3. This is 2,3,4,5-tetrahydropyridine-2,6-dicarboxylate N-succinyltransferase from Shigella dysenteriae serotype 1 (strain Sd197).